We begin with the raw amino-acid sequence, 567 residues long: Urease subunit alpha (567 aa).

Residues 129–567 (GGIDSHIHFI…LPLAQRYFLF (439 aa)) form the Urease domain. Positions 134, 136, and 217 each coordinate Ni(2+). Lys-217 is modified (N6-carboxylysine). His-219 contacts substrate. Ni(2+) contacts are provided by His-246 and His-272. The Proton donor role is filled by His-320. Asp-360 provides a ligand contact to Ni(2+).

It belongs to the metallo-dependent hydrolases superfamily. Urease alpha subunit family. As to quaternary structure, heterotrimer of UreA (gamma), UreB (beta) and UreC (alpha) subunits. Three heterotrimers associate to form the active enzyme. Ni cation is required as a cofactor. Carboxylation allows a single lysine to coordinate two nickel ions.

It localises to the cytoplasm. The catalysed reaction is urea + 2 H2O + H(+) = hydrogencarbonate + 2 NH4(+). Its pathway is nitrogen metabolism; urea degradation; CO(2) and NH(3) from urea (urease route): step 1/1. This chain is Urease subunit alpha, found in Pseudomonas putida (strain W619).